Reading from the N-terminus, the 49-residue chain is Large ribosomal subunit protein bL33B (49 aa).

Belongs to the bacterial ribosomal protein bL33 family.

The protein is Large ribosomal subunit protein bL33B (rpmG2) of Listeria innocua serovar 6a (strain ATCC BAA-680 / CLIP 11262).